The primary structure comprises 435 residues: Protoheme IX farnesyltransferase, mitochondrial (435 aa).

A mitochondrion-targeting transit peptide spans 1 to 35; that stretch reads MPALCATYLIHSGNLRACLRIVPLTKPSVVIAYRH. The next 6 helical transmembrane spans lie at 135–155, 157–177, 212–232, 250–270, 324–344, and 401–421; these read VLVM…ATVL, LLSL…INMG, GVIG…LLGA, IINT…GWAA, VALR…YYGI, and FWVS…HKKG.

Belongs to the UbiA prenyltransferase family.

It localises to the mitochondrion membrane. Converts protoheme IX and farnesyl diphosphate to heme O. The protein is Protoheme IX farnesyltransferase, mitochondrial (COX10) of Eremothecium gossypii (strain ATCC 10895 / CBS 109.51 / FGSC 9923 / NRRL Y-1056) (Yeast).